We begin with the raw amino-acid sequence, 348 residues long: Major outer membrane protein P.IB (348 aa).

The first 19 residues, 1-19 (MKKSLIALTLAALPVAAMA), serve as a signal peptide directing secretion.

It belongs to the Gram-negative porin family. In terms of assembly, homotrimer.

The protein localises to the cell outer membrane. Its function is as follows. Serves as a slightly cation selective porin. Major antigen on the gonococcal cell surface and it may have pathogenic properties in addition to its porin activity. The polypeptide is Major outer membrane protein P.IB (porB) (Neisseria gonorrhoeae).